A 210-amino-acid polypeptide reads, in one-letter code: Na(+)-translocating NADH-quinone reductase subunit D (210 aa).

5 consecutive transmembrane segments (helical) span residues 42–62, 72–92, 103–123, 131–151, and 178–198; these read FVMT…VSLI, IIVQ…VLKA, VFVG…AFAM, LIDG…VGFF, and NGLM…IWVI.

It belongs to the NqrDE/RnfAE family. Composed of six subunits; NqrA, NqrB, NqrC, NqrD, NqrE and NqrF.

Its subcellular location is the cell inner membrane. It carries out the reaction a ubiquinone + n Na(+)(in) + NADH + H(+) = a ubiquinol + n Na(+)(out) + NAD(+). In terms of biological role, NQR complex catalyzes the reduction of ubiquinone-1 to ubiquinol by two successive reactions, coupled with the transport of Na(+) ions from the cytoplasm to the periplasm. NqrA to NqrE are probably involved in the second step, the conversion of ubisemiquinone to ubiquinol. The polypeptide is Na(+)-translocating NADH-quinone reductase subunit D (Vibrio parahaemolyticus serotype O3:K6 (strain RIMD 2210633)).